A 551-amino-acid polypeptide reads, in one-letter code: Small ribosomal subunit protein bS1 (551 aa).

S1 motif domains lie at 21 to 83 (GALV…LSRE), 101 to 167 (GEMV…VSRR), 188 to 256 (GQEI…LGMK), 273 to 343 (NSRV…LGIK), 360 to 430 (DEKI…LGIK), and 447 to 516 (DAVI…VSHK).

This sequence belongs to the bacterial ribosomal protein bS1 family.

Binds mRNA; thus facilitating recognition of the initiation point. It is needed to translate mRNA with a short Shine-Dalgarno (SD) purine-rich sequence. The polypeptide is Small ribosomal subunit protein bS1 (rpsA) (Coxiella burnetii (strain RSA 493 / Nine Mile phase I)).